A 490-amino-acid polypeptide reads, in one-letter code: Betaine aldehyde dehydrogenase (490 aa).

K(+)-binding residues include T26, I27, and D93. Position 150 to 152 (150 to 152) interacts with NAD(+); that stretch reads GAW. K162 (charge relay system) is an active-site residue. NAD(+) is bound at residue 176-179; sequence KPSE. V180 is a K(+) binding site. NAD(+) is bound at residue 230 to 233; that stretch reads GTST. L246 contributes to the K(+) binding site. The active-site Proton acceptor is E252. G254, C286, and E387 together coordinate NAD(+). C286 acts as the Nucleophile in catalysis. At C286 the chain carries Cysteine sulfenic acid (-SOH). Residues K457 and G460 each contribute to the K(+) site. Catalysis depends on E464, which acts as the Charge relay system.

This sequence belongs to the aldehyde dehydrogenase family. In terms of assembly, dimer of dimers. It depends on K(+) as a cofactor.

It catalyses the reaction betaine aldehyde + NAD(+) + H2O = glycine betaine + NADH + 2 H(+). It participates in amine and polyamine biosynthesis; betaine biosynthesis via choline pathway; betaine from betaine aldehyde: step 1/1. Functionally, involved in the biosynthesis of the osmoprotectant glycine betaine. Catalyzes the irreversible oxidation of betaine aldehyde to the corresponding acid. The polypeptide is Betaine aldehyde dehydrogenase (Pseudomonas paraeruginosa (strain DSM 24068 / PA7) (Pseudomonas aeruginosa (strain PA7))).